The primary structure comprises 443 residues: MQWLHTLPPPLQDEVAALISAVPQAAPTLDKLFEYASNSPQKQKIPDPPRKKRQQTSAPPQLPPPLTQADIIFHLSNISCQSPFRKRLGFAFHLALGPQGPVPALSLVNNQLQPEFSLMNLGQDIVFCSLLPILGNSTVSSKKDTVLLLVWLAHGDPIVCQLNFDAVKKQLVAEGKVPASAESELDSESEEDDAEGIRPINEALVDFLVRQFQLCGIRLLNYLPFSTGSKNKLTLNKDTALALSTNGTSVNDVVIVQAYRGSKDGALVLLGGTQDQPGTIIFGFRKPILLFRANSVKRISYSNITRLTFNVSVTVHNDTRPDGEETIEFSMLDQAYFQILDDFVKRQGINDDSFNEALREKQKADPNVKAETDAEDAEAPDSDDEEEDGTYQAGVESDSDNEKKEEDGEENSEDEDSEDGEESEDSEDGELSEDGESDDLSLS.

Disordered stretches follow at residues 38 to 64 and 358 to 443; these read NSPQ…QLPP and LREK…LSLS. Residues 358 to 372 are compositionally biased toward basic and acidic residues; sequence LREKQKADPNVKAET. Acidic residues-rich tracts occupy residues 373–389 and 407–443; these read DAED…EEDG and DGEE…LSLS.

The protein belongs to the RTT106 family. In terms of assembly, interacts with histones H3 and H4.

The protein localises to the nucleus. It localises to the chromosome. Its function is as follows. Histones H3 and H4 chaperone involved in the nucleosome formation and heterochromatin silencing. Required for the deposition of H3K56ac-carrying H3-H4 complex onto newly-replicated DNA. Plays a role in the transcriptional regulation of the cell-cycle dependent histone genes by creating a repressive structure at the core histone gene promoter. The sequence is that of Histone chaperone RTT106 (RTT106) from Meyerozyma guilliermondii (strain ATCC 6260 / CBS 566 / DSM 6381 / JCM 1539 / NBRC 10279 / NRRL Y-324) (Yeast).